A 291-amino-acid polypeptide reads, in one-letter code: uncharacterized protein (291 aa).

The HTH araC/xylS-type domain maps to 191 to 289 (KQMLNWIHLH…NMTPLSYKKM (99 aa)). DNA-binding regions (H-T-H motif) lie at residues 208 to 229 (EDIAKAGQLSRSECCRYFKRML) and 256 to 279 (VTEVSYQVGFNSTSYFISKFQQAM).

This is an uncharacterized protein from Bacillus subtilis (strain 168).